The chain runs to 505 residues: Pleckstrin homology domain-containing family D member 1 (505 aa).

Residues 28–136 enclose the PH domain; sequence KVQLYGVLWK…WLEMLQESGK (109 aa). Residues 146-391 adopt a coiled-coil conformation; it reads EAMIKSLEAQ…KVRNKEKEER (246 aa). Positions 264–284 are disordered; that stretch reads DKNQPQPLTNQSEQPPASDGL. Positions 267–278 are enriched in polar residues; that stretch reads QPQPLTNQSEQP. Position 502 is an omega-N-methylarginine (Arg502).

The protein belongs to the PLEKHD1 family.

The polypeptide is Pleckstrin homology domain-containing family D member 1 (Plekhd1) (Mus musculus (Mouse)).